The following is a 429-amino-acid chain: Probable M18 family aminopeptidase 2 (429 aa).

Residues His82, His156, and His401 each contribute to the Zn(2+) site.

Belongs to the peptidase M18 family. Zn(2+) is required as a cofactor.

This is Probable M18 family aminopeptidase 2 from Pseudomonas syringae pv. syringae (strain B728a).